The sequence spans 276 residues: uncharacterized protein (276 aa).

To E.cuniculi ECU05_1600/ECU11_0130.

This is an uncharacterized protein from Encephalitozoon cuniculi (strain GB-M1) (Microsporidian parasite).